Consider the following 111-residue polypeptide: uncharacterized protein (111 aa).

The chain crosses the membrane as a helical span at residues 48–70 (LFLVPFPASFTRWLTFLFHLVIY).

Its subcellular location is the membrane. This is an uncharacterized protein from Saccharomyces cerevisiae (strain ATCC 204508 / S288c) (Baker's yeast).